The primary structure comprises 67 residues: MEEWDVPQMKKEVESLKYQLAFKREMSSKTIPELLKWIEDGIPKDPFLNPDLMKNNPWVEKAKCTIL.

Residue Cys-64 is modified to Cysteine methyl ester. A lipid anchor (S-farnesyl cysteine) is attached at Cys-64. Residues 65–67 (TIL) constitute a propeptide, removed in mature form.

It belongs to the G protein gamma family. G proteins are composed of 3 units, alpha, beta and gamma.

The protein resides in the cell membrane. In terms of biological role, guanine nucleotide-binding proteins (G proteins) are involved as a modulator or transducer in various transmembrane signaling systems. The beta and gamma chains are required for the GTPase activity, for replacement of GDP by GTP, and for G protein-effector interaction. The protein is Guanine nucleotide-binding protein G(I)/G(S)/G(O) subunit gamma-13 (Gng13) of Mus musculus (Mouse).